Here is a 427-residue protein sequence, read N- to C-terminus: Gamma-glutamyl phosphate reductase (427 aa).

This sequence belongs to the gamma-glutamyl phosphate reductase family.

It is found in the cytoplasm. It catalyses the reaction L-glutamate 5-semialdehyde + phosphate + NADP(+) = L-glutamyl 5-phosphate + NADPH + H(+). The protein operates within amino-acid biosynthesis; L-proline biosynthesis; L-glutamate 5-semialdehyde from L-glutamate: step 2/2. In terms of biological role, catalyzes the NADPH-dependent reduction of L-glutamate 5-phosphate into L-glutamate 5-semialdehyde and phosphate. The product spontaneously undergoes cyclization to form 1-pyrroline-5-carboxylate. The sequence is that of Gamma-glutamyl phosphate reductase from Sinorhizobium medicae (strain WSM419) (Ensifer medicae).